The sequence spans 180 residues: MADSELQLVEQRIRSFPDFPTPGVVFRDISPVLKDPASFRAAIGLLARHLKATHGGRIDYIAGLDSRGFLFGPSLAQELGLGCVLIRKRGKLPGPTLWASYSLEYGKAELEIQKDALEPGQRVVVVDDLLATGGTMNAACELLGRLQAEVLECVSLVELTSLKGREKLAPVPFFSLLQYE.

An N-acetylalanine modification is found at Ala-2. Ser-4, Ser-15, and Ser-30 each carry phosphoserine. Tyr-60 carries the post-translational modification Phosphotyrosine. Position 66 is a phosphoserine (Ser-66). Lys-114 is subject to N6-acetyllysine. Phosphothreonine is present on Thr-135.

The protein belongs to the purine/pyrimidine phosphoribosyltransferase family. As to quaternary structure, homodimer.

It localises to the cytoplasm. It catalyses the reaction AMP + diphosphate = 5-phospho-alpha-D-ribose 1-diphosphate + adenine. The protein operates within purine metabolism; AMP biosynthesis via salvage pathway; AMP from adenine: step 1/1. Catalyzes a salvage reaction resulting in the formation of AMP, that is energically less costly than de novo synthesis. In Homo sapiens (Human), this protein is Adenine phosphoribosyltransferase.